The sequence spans 675 residues: Rho GTPase-activating protein 40 (675 aa).

Disordered regions lie at residues arginine 95–serine 118 and lysine 187–leucine 218. The span at serine 103–alanine 116 shows a compositional bias: acidic residues. The 200-residue stretch at valine 323–tryptophan 522 folds into the Rho-GAP domain.

Its function is as follows. GTPase activator for the Rho-type GTPases by converting them to an inactive GDP-bound state. The protein is Rho GTPase-activating protein 40 of Homo sapiens (Human).